Reading from the N-terminus, the 69-residue chain is Putative membrane protein insertion efficiency factor (69 aa).

This sequence belongs to the UPF0161 family.

Its subcellular location is the cell membrane. Its function is as follows. Could be involved in insertion of integral membrane proteins into the membrane. The chain is Putative membrane protein insertion efficiency factor from Clostridium perfringens (strain SM101 / Type A).